Here is a 279-residue protein sequence, read N- to C-terminus: Large ribosomal subunit protein uL2 (279 aa).

The tract at residues 223 to 279 (VVMNPVDHPHGGGEGRTSGGRHPVTPWGKPTKGKRTRSNKKTDSLIMRSRHLAKKKR) is disordered. A compositionally biased stretch (basic residues) spans 270–279 (RSRHLAKKKR).

The protein belongs to the universal ribosomal protein uL2 family. Part of the 50S ribosomal subunit. Forms a bridge to the 30S subunit in the 70S ribosome.

In terms of biological role, one of the primary rRNA binding proteins. Required for association of the 30S and 50S subunits to form the 70S ribosome, for tRNA binding and peptide bond formation. It has been suggested to have peptidyltransferase activity; this is somewhat controversial. Makes several contacts with the 16S rRNA in the 70S ribosome. The chain is Large ribosomal subunit protein uL2 from Rhodospirillum rubrum (strain ATCC 11170 / ATH 1.1.1 / DSM 467 / LMG 4362 / NCIMB 8255 / S1).